Consider the following 143-residue polypeptide: Nucleoside diphosphate kinase (143 aa).

In terms of domain architecture, NDPK-like spans 1 to 132 (MVKPDGVQRG…LWFSPQELCQ (132 aa)). ADP is bound by residues Lys-3, Phe-51, Arg-79, Thr-85, Arg-96, Val-103, and Asn-106. Lys-3, Phe-51, Arg-79, Thr-85, and Arg-96 together coordinate ATP. Asn-106 provides a ligand contact to ATP. The Pros-phosphohistidine intermediate role is filled by His-109.

The protein belongs to the NDK family. As to quaternary structure, homohexamer. Requires Mg(2+) as cofactor.

The enzyme catalyses a 2'-deoxyribonucleoside 5'-diphosphate + ATP = a 2'-deoxyribonucleoside 5'-triphosphate + ADP. It carries out the reaction a ribonucleoside 5'-diphosphate + ATP = a ribonucleoside 5'-triphosphate + ADP. It catalyses the reaction GDP + ATP = GTP + ADP. It functions in the pathway purine metabolism; purine nucleotide biosynthesis. In terms of biological role, major role in the synthesis of nucleoside triphosphates other than ATP. The ATP gamma phosphate is transferred to the NDP beta phosphate via a ping-pong mechanism, using a phosphorylated active-site intermediate. The chain is Nucleoside diphosphate kinase from Schistosoma mansoni (Blood fluke).